The chain runs to 423 residues: Maintenance of mitochondrial morphology protein 1 (423 aa).

The Lumenal portion of the chain corresponds to 1-20; the sequence is MTIPAPIPDKAESSLSFTQG. A helical membrane pass occupies residues 21–41; the sequence is LLLGQLSIVILIGAFIKFFIF. Topologically, residues 42–423 are cytoplasmic; sequence GDPPSPDVTA…PGSMPGLSMT (382 aa). Residues 115 to 327 form the SMP-LTD domain; it reads QPESLDWFNV…EPRFQQIELP (213 aa). 2 disordered regions span residues 332 to 372 and 387 to 423; these read RKKN…KEVE and SLDVPDEGSEDGLRFRRKSKGRDEYAMPGSMPGLSMT. Positions 355 to 372 are enriched in basic and acidic residues; that stretch reads RSRDVERDLREEARKEVE.

It belongs to the MMM1 family. Homodimer. Component of the ER-mitochondria encounter structure (ERMES) or MDM complex, composed of MMM1, MDM10, MDM12 and MDM34. An MMM1 homodimer associates with one molecule of MDM12 on each side in a pairwise head-to-tail manner, and the SMP-LTD domains of MMM1 and MDM12 generate a continuous hydrophobic tunnel for phospholipid trafficking.

It localises to the endoplasmic reticulum membrane. In terms of biological role, component of the ERMES/MDM complex, which serves as a molecular tether to connect the endoplasmic reticulum (ER) and mitochondria. Components of this complex are involved in the control of mitochondrial shape and protein biogenesis, and function in nonvesicular lipid trafficking between the ER and mitochondria. The MDM12-MMM1 subcomplex functions in the major beta-barrel assembly pathway that is responsible for biogenesis of all outer membrane beta-barrel proteins, and acts in a late step after the SAM complex. The MDM10-MDM12-MMM1 subcomplex further acts in the TOM40-specific pathway after the action of the MDM12-MMM1 complex. Essential for establishing and maintaining the structure of mitochondria and maintenance of mtDNA nucleoids. The chain is Maintenance of mitochondrial morphology protein 1 from Botryotinia fuckeliana (strain B05.10) (Noble rot fungus).